The primary structure comprises 478 residues: Proline--tRNA ligase (478 aa).

It belongs to the class-II aminoacyl-tRNA synthetase family. ProS type 3 subfamily. As to quaternary structure, homodimer.

Its subcellular location is the cytoplasm. The catalysed reaction is tRNA(Pro) + L-proline + ATP = L-prolyl-tRNA(Pro) + AMP + diphosphate. In terms of biological role, catalyzes the attachment of proline to tRNA(Pro) in a two-step reaction: proline is first activated by ATP to form Pro-AMP and then transferred to the acceptor end of tRNA(Pro). This is Proline--tRNA ligase from Ruminiclostridium cellulolyticum (strain ATCC 35319 / DSM 5812 / JCM 6584 / H10) (Clostridium cellulolyticum).